We begin with the raw amino-acid sequence, 385 residues long: DNA replication and repair protein RecF (385 aa).

30-37 (GPNGYGKT) contributes to the ATP binding site.

This sequence belongs to the RecF family.

Its subcellular location is the cytoplasm. In terms of biological role, the RecF protein is involved in DNA metabolism; it is required for DNA replication and normal SOS inducibility. RecF binds preferentially to single-stranded, linear DNA. It also seems to bind ATP. The sequence is that of DNA replication and repair protein RecF from Mycobacterium tuberculosis (strain ATCC 25177 / H37Ra).